Here is a 508-residue protein sequence, read N- to C-terminus: 2,3-bisphosphoglycerate-independent phosphoglycerate mutase (508 aa).

Mn(2+) contacts are provided by Asp-14 and Ser-64. The active-site Phosphoserine intermediate is Ser-64. Residues His-125, 155–156 (RD), Arg-187, Arg-193, 259–262 (RADR), and Lys-332 contribute to the substrate site. Positions 399, 403, 440, 441, and 459 each coordinate Mn(2+).

It belongs to the BPG-independent phosphoglycerate mutase family. As to quaternary structure, monomer. The cofactor is Mn(2+).

It catalyses the reaction (2R)-2-phosphoglycerate = (2R)-3-phosphoglycerate. It functions in the pathway carbohydrate degradation; glycolysis; pyruvate from D-glyceraldehyde 3-phosphate: step 3/5. Its function is as follows. Catalyzes the interconversion of 2-phosphoglycerate and 3-phosphoglycerate. This is 2,3-bisphosphoglycerate-independent phosphoglycerate mutase from Pseudomonas fluorescens (strain Pf0-1).